Reading from the N-terminus, the 314-residue chain is Endolytic peptidoglycan transglycosylase RlpA (314 aa).

The signal sequence occupies residues 1 to 19 (MGWALKKVCFLGVIFLISA). Cysteine 20 carries the N-palmitoyl cysteine lipid modification. The S-diacylglycerol cysteine moiety is linked to residue cysteine 20. One can recognise an SPOR domain in the interval 241-314 (SVSGGKFSLQ…YNQNAVLTRE (74 aa)).

It belongs to the RlpA family.

It localises to the cell membrane. In terms of biological role, lytic transglycosylase with a strong preference for naked glycan strands that lack stem peptides. This chain is Endolytic peptidoglycan transglycosylase RlpA, found in Helicobacter pylori (strain J99 / ATCC 700824) (Campylobacter pylori J99).